Here is a 475-residue protein sequence, read N- to C-terminus: Ribulose bisphosphate carboxylase large chain (475 aa).

The propeptide occupies 1-2 (MS). At P3 the chain carries N-acetylproline. At K14 the chain carries N6,N6,N6-trimethyllysine. Residues N123 and T173 each coordinate substrate. K175 serves as the catalytic Proton acceptor. K177 provides a ligand contact to substrate. Positions 201, 203, and 204 each coordinate Mg(2+). K201 bears the N6-carboxylysine mark. The active-site Proton acceptor is H294. The substrate site is built by R295, H327, and S379.

Belongs to the RuBisCO large chain family. Type I subfamily. Heterohexadecamer of 8 large chains and 8 small chains; disulfide-linked. The disulfide link is formed within the large subunit homodimers. Mg(2+) is required as a cofactor. In terms of processing, the disulfide bond which can form in the large chain dimeric partners within the hexadecamer appears to be associated with oxidative stress and protein turnover.

It localises to the plastid. The protein localises to the chloroplast. It catalyses the reaction 2 (2R)-3-phosphoglycerate + 2 H(+) = D-ribulose 1,5-bisphosphate + CO2 + H2O. The enzyme catalyses D-ribulose 1,5-bisphosphate + O2 = 2-phosphoglycolate + (2R)-3-phosphoglycerate + 2 H(+). Functionally, ruBisCO catalyzes two reactions: the carboxylation of D-ribulose 1,5-bisphosphate, the primary event in carbon dioxide fixation, as well as the oxidative fragmentation of the pentose substrate in the photorespiration process. Both reactions occur simultaneously and in competition at the same active site. This Quercus rubra (Northern red oak) protein is Ribulose bisphosphate carboxylase large chain.